Consider the following 522-residue polypeptide: Cytochrome P450 4F4 (522 aa).

2 helical membrane passes run 15–35 (TSLP…VRVL) and 87–107 (GFMT…PDVI). Positions 328 and 468 each coordinate heme.

The protein belongs to the cytochrome P450 family. It depends on heme as a cofactor. As to expression, expressed in hepatocytes. High expression in liver and kidney. Lower expression in brain.

Its subcellular location is the endoplasmic reticulum membrane. It is found in the microsome membrane. The enzyme catalyses (5Z,8Z,11Z,14Z)-eicosatetraenoate + reduced [NADPH--hemoprotein reductase] + O2 = 20-hydroxy-(5Z,8Z,11Z,14Z)-eicosatetraenoate + oxidized [NADPH--hemoprotein reductase] + H2O + H(+). The catalysed reaction is leukotriene B4 + reduced [NADPH--hemoprotein reductase] + O2 = 20-hydroxy-leukotriene B4 + oxidized [NADPH--hemoprotein reductase] + H2O + H(+). It catalyses the reaction 6-trans-leukotriene B4 + reduced [NADPH--hemoprotein reductase] + O2 = 20-hydroxy-6-trans-leukotriene B4 + oxidized [NADPH--hemoprotein reductase] + H2O + H(+). It carries out the reaction prostaglandin A1 + reduced [NADPH--hemoprotein reductase] + O2 = 20-hydroxy prostaglandin A1 + oxidized [NADPH--hemoprotein reductase] + H2O + H(+). The enzyme catalyses prostaglandin E1 + reduced [NADPH--hemoprotein reductase] + O2 = 20-hydroxy prostaglandin E1 + oxidized [NADPH--hemoprotein reductase] + H2O + H(+). In terms of biological role, a cytochrome P450 monooxygenase involved in the metabolism of arachidonic acid and its oxygenated derivatives. Mechanistically, uses molecular oxygen inserting one oxygen atom into a substrate, and reducing the second into a water molecule, with two electrons provided by NADPH via cytochrome P450 reductase (CPR; NADPH-ferrihemoprotein reductase). Participates in the conversion of arachidonic acid to omega-hydroxyeicosatetraenoic acid (20-HETE), a signaling molecule acting both as vasoconstrictive and natriuretic with overall effect on arterial blood pressure. Hydroxylates the terminal carbon (omega-hydroxylation) of inflammatory lipid mediators, including prostaglandin (PG) A1, PGE1 and leukotriene B4 (LTB4), and may play a role in inactivation of these oxylipins during the resolution of inflammation. This chain is Cytochrome P450 4F4, found in Rattus norvegicus (Rat).